The following is a 434-amino-acid chain: Purple acid phosphatase 22 (434 aa).

The N-terminal stretch at 1–22 (MKLFGLFLSFTLLFLCPFISQA) is a signal peptide. N-linked (GlcNAc...) asparagine glycosylation occurs at Asn-116. Residues Asp-148, Asp-175, and Tyr-178 each coordinate Fe cation. Asp-175 is a Zn(2+) binding site. Zn(2+) is bound by residues Asn-208 and His-292. Asn-208 serves as a coordination point for substrate. His-302 functions as the Proton donor in the catalytic mechanism. His-329 serves as a coordination point for Zn(2+). 329-331 (HVH) is a substrate binding site. His-331 lines the Fe cation pocket. An N-linked (GlcNAc...) asparagine glycan is attached at Asn-403.

The protein belongs to the metallophosphoesterase superfamily. Purple acid phosphatase family. In terms of assembly, homodimer. It depends on Fe cation as a cofactor. Zn(2+) is required as a cofactor. Expressed in roots, stems, leaves, flowers and siliques.

The protein localises to the secreted. It catalyses the reaction a phosphate monoester + H2O = an alcohol + phosphate. The polypeptide is Purple acid phosphatase 22 (PAP22) (Arabidopsis thaliana (Mouse-ear cress)).